Reading from the N-terminus, the 51-residue chain is SPbeta prophage-derived uncharacterized protein YorQ (51 aa).

The sequence is that of SPbeta prophage-derived uncharacterized protein YorQ (yorQ) from Bacillus subtilis (strain 168).